The chain runs to 177 residues: dCTP deaminase, dUMP-forming (177 aa).

DCTP-binding positions include 95–100 (RSSLGR), Asp112, 120–122 (TLE), Gln141, Tyr155, and Gln162. Glu122 (proton donor/acceptor) is an active-site residue.

The protein belongs to the dCTP deaminase family. In terms of assembly, homotrimer.

The enzyme catalyses dCTP + 2 H2O = dUMP + NH4(+) + diphosphate. The protein operates within pyrimidine metabolism; dUMP biosynthesis; dUMP from dCTP: step 1/1. Its function is as follows. Bifunctional enzyme that catalyzes both the deamination of dCTP to dUTP and the hydrolysis of dUTP to dUMP without releasing the toxic dUTP intermediate. The chain is dCTP deaminase, dUMP-forming from Hydrogenobaculum sp. (strain Y04AAS1).